A 434-amino-acid chain; its full sequence is ATP-dependent protease ATPase subunit HslU (434 aa).

Residues isoleucine 18, glycine 60–glutamate 65, aspartate 247, glutamate 312, and arginine 384 contribute to the ATP site.

The protein belongs to the ClpX chaperone family. HslU subfamily. In terms of assembly, a double ring-shaped homohexamer of HslV is capped on each side by a ring-shaped HslU homohexamer. The assembly of the HslU/HslV complex is dependent on binding of ATP.

The protein resides in the cytoplasm. Its function is as follows. ATPase subunit of a proteasome-like degradation complex; this subunit has chaperone activity. The binding of ATP and its subsequent hydrolysis by HslU are essential for unfolding of protein substrates subsequently hydrolyzed by HslV. HslU recognizes the N-terminal part of its protein substrates and unfolds these before they are guided to HslV for hydrolysis. The protein is ATP-dependent protease ATPase subunit HslU of Brucella abortus (strain S19).